We begin with the raw amino-acid sequence, 370 residues long: DNA replication and repair protein RecF (370 aa).

30–37 (GDNGSGKT) provides a ligand contact to ATP.

It belongs to the RecF family.

It localises to the cytoplasm. Functionally, the RecF protein is involved in DNA metabolism; it is required for DNA replication and normal SOS inducibility. RecF binds preferentially to single-stranded, linear DNA. It also seems to bind ATP. The sequence is that of DNA replication and repair protein RecF from Stutzerimonas stutzeri (strain A1501) (Pseudomonas stutzeri).